The primary structure comprises 239 residues: Calcium load-activated calcium channel (239 aa).

Residues 1-55 (MPRKRKCDLRAVRVGLLLGGGGVYGSRFRFTFPGCRALSPWRVRVQRRRCEMSTM) lie on the Lumenal side of the membrane. The chain crosses the membrane as a helical span at residues 56 to 83 (FADTLLIVFISVCTALLAEGITWVLVYR). The stretch at 83–140 (RTDKYKRLKAEVEKQSKKLEKKKETITESAGRQQKKKIERQEEKLKNNNRDLSMVRMK) forms a coiled coil. The Cytoplasmic segment spans residues 84–137 (TDKYKRLKAEVEKQSKKLEKKKETITESAGRQQKKKIERQEEKLKNNNRDLSMV). Ser111 carries the phosphoserine modification. A helical transmembrane segment spans residues 138-157 (RMKSMFAIGFCFTALMGMFN). Residues 158–171 (SIFDGRVVAKLPFT) are Lumenal-facing. The stretch at 172 to 181 (PLSYIQGLSH) is an intramembrane region. Residues 182-191 (RNLLGDDTTD) lie on the Lumenal side of the membrane. Residues 192–213 (CSFIFLYILCTMSIRQNIQKIL) traverse the membrane as a helical segment. Residues 214-239 (GLAPSRAATKQAGGFLGPPPPSGKFS) lie on the Cytoplasmic side of the membrane. Ser239 is subject to Phosphoserine.

This sequence belongs to the TMCO1 family. In terms of assembly, homodimer and homotetramer. Homodimer under resting conditions; forms homotetramers following ER calcium overload. Component of the GET- and EMC-like (GEL) complex, composed of RAB5IF/OPTI and TMCO1. The GEL complex is part of the multi-pass translocon (MPT) complex, composed of three subcomplexes, the GEL complex (composed of RAB5IF/OPTI and TMCO1), the BOS complex (composed of NCLN/Nicalin, NOMO and TMEM147) and the PAT complex (composed of WDR83OS/Asterix and CCDC47). The MPT complex associates with the SEC61 complex. As to expression, widely expressed in adult and fetal tissues, with higher levels in thymus, prostate, testis and small intestine and lower levels in brain, placenta, lung and kidney. Present in most tissues in the eye, including the trabecular meshwork and retina (at protein level).

The protein localises to the endoplasmic reticulum membrane. It is found in the golgi apparatus membrane. Its subcellular location is the mitochondrion membrane. The enzyme catalyses Ca(2+)(in) = Ca(2+)(out). In terms of biological role, endoplasmic reticulum (ER) calcium-selective channel preventing intracellular Ca2(+) stores from overfilling and maintaining calcium homeostasis in the ER. In response to endoplasmic reticulum (ER) Ca2(+) overloading, assembles into a homotetramer, forming a functional calcium-selective channel facilitating Ca2(+) release. Mediates ER Ca2(+) homeostasis in osteoblasts and plays a key role in bone formation, via the CaMKII-HDAC4-RUNX2 signaling axis. Component of the multi-pass translocon (MPT) complex that mediates insertion of multi-pass membrane proteins into the lipid bilayer of membranes. The MPT complex takes over after the SEC61 complex: following membrane insertion of the first few transmembrane segments of proteins by the SEC61 complex, the MPT complex occludes the lateral gate of the SEC61 complex to promote insertion of subsequent transmembrane regions. Within the MPT complex, the GEL subcomplex may mediate insertion of transmembrane regions into the membrane. In Homo sapiens (Human), this protein is Calcium load-activated calcium channel.